We begin with the raw amino-acid sequence, 426 residues long: Molybdopterin molybdenumtransferase 1 (426 aa).

This sequence belongs to the MoeA family. Mg(2+) serves as cofactor.

It carries out the reaction adenylyl-molybdopterin + molybdate = Mo-molybdopterin + AMP + H(+). It participates in cofactor biosynthesis; molybdopterin biosynthesis. Functionally, catalyzes the insertion of molybdate into adenylated molybdopterin with the concomitant release of AMP. In Mycobacterium tuberculosis (strain ATCC 25618 / H37Rv), this protein is Molybdopterin molybdenumtransferase 1 (moeA1).